Reading from the N-terminus, the 286-residue chain is L-cysteine S-thiosulfotransferase subunit SoxA (286 aa).

Positions 1–26 are cleaved as a signal peptide; it reads MTVSKRFLAPVFAMVGGLVLAFSANA. The Cytochrome c domain occupies 80–166; the sequence is LAVERGADIW…ALTSYIKHQS (87 aa). The heme site is built by cysteine 100, cysteine 103, histidine 104, cysteine 138, cysteine 202, cysteine 205, and histidine 206. Arginine 243 contributes to the substrate binding site. Cysteine 247 contacts heme. Cysteine 247 serves as the catalytic Cysteine persulfide intermediate.

The protein belongs to the SoxA family. In terms of assembly, heterodimer of SoxA and SoxX. It depends on heme as a cofactor. In terms of processing, cysteine persulfide at Cys-247.

The protein resides in the periplasm. The catalysed reaction is L-cysteinyl-[SoxY protein] + thiosulfate + 2 Fe(III)-[cytochrome c] = S-sulfosulfanyl-L-cysteinyl-[SoxY protein] + 2 Fe(II)-[cytochrome c] + 2 H(+). The enzyme catalyses S-sulfanyl-L-cysteinyl-[SoxY protein] + thiosulfate + 2 Fe(III)-[cytochrome c] = S-(2-sulfodisulfanyl)-L-cysteinyl-[SoxY protein] + 2 Fe(II)-[cytochrome c] + 2 H(+). Functionally, C-type diheme cytochrome, which is part of the SoxAX cytochrome complex involved in sulfur oxidation. The SoxAX complex catalyzes the formation of a heterodisulfide bond between the conserved cysteine residue on a sulfur carrier SoxYZ complex subunit SoxY and thiosulfate or other inorganic sulfur substrates. This leads to the liberation of two electrons, which may be transferred from the SoxAX complex to another cytochrome c that then channels them into the respiratory electron transport chain. Some electrons may be used for reductive CO(2) fixation. The polypeptide is L-cysteine S-thiosulfotransferase subunit SoxA (Pseudaminobacter salicylatoxidans).